The primary structure comprises 397 residues: Protein Rep52 (397 aa).

The 156-residue stretch at 84–239 folds into the SF3 helicase domain; sequence DPQYAASVFL…LDHDFGKVTK (156 aa). Residue 110–117 participates in ATP binding; that stretch reads GPATTGKT. Positions 265 to 296 are disordered; it reads GGAKKRPAPSDADISEPKRVRESVAQPSTSDA.

Homooligomer. Interacts with host PRKX.

Its subcellular location is the host nucleus. In terms of biological role, plays a critical role during packaging of viral DNA into empty capsids, where they are thought to be part of the packaging motor complex. The single stranded genomic DNA is packaged in a 3' to 5' direction and requires the association between viral DNA and Rep40. Regulates host PKA activity by interacting with host PRKX as a mechanism to interfere with helper virus propagation and to promote its own replication. This chain is Protein Rep52 (Rep52), found in Mammalia (AAV-2).